The sequence spans 515 residues: Maturase K (515 aa).

It belongs to the intron maturase 2 family. MatK subfamily.

The protein resides in the plastid. Its subcellular location is the chloroplast. Usually encoded in the trnK tRNA gene intron. Probably assists in splicing its own and other chloroplast group II introns. This chain is Maturase K, found in Pinus clausa (Sand pine).